The sequence spans 139 residues: D-ribose pyranase (139 aa).

H20 functions as the Proton donor in the catalytic mechanism. Substrate is bound by residues D28, H106, and 128–130; that span reads YAN.

The protein belongs to the RbsD / FucU family. RbsD subfamily. Homodecamer.

It localises to the cytoplasm. The catalysed reaction is beta-D-ribopyranose = beta-D-ribofuranose. The protein operates within carbohydrate metabolism; D-ribose degradation; D-ribose 5-phosphate from beta-D-ribopyranose: step 1/2. Functionally, catalyzes the interconversion of beta-pyran and beta-furan forms of D-ribose. This is D-ribose pyranase from Citrobacter koseri (strain ATCC BAA-895 / CDC 4225-83 / SGSC4696).